A 530-amino-acid polypeptide reads, in one-letter code: Netrin-G2 (530 aa).

The signal sequence occupies residues 1-17 (MLHLLALFLHCLPLASG). Intrachain disulfides connect Cys22-Cys39, Cys61-Cys81, and Cys69-Cys77. The Laminin N-terminal domain occupies 35–286 (EFYACQPKVM…AISNIEVIGR (252 aa)). The NGL discriminant loop I stretch occupies residues 69–88 (CSHENPYLCSNECDASNPDL). N-linked (GlcNAc...) asparagine glycosylation is found at Asn122 and Asn128. Cys171 and Cys195 are joined by a disulfide. The segment at 201-203 (RWA) is NGL discriminant loop II. An NGL discriminant loop III region spans residues 264 to 267 (TYVQ). Disulfide bonds link Cys287-Cys296, Cys289-Cys305, Cys307-Cys316, Cys319-Cys344, Cys353-Cys362, Cys355-Cys373, Cys376-Cys385, Cys388-Cys406, Cys409-Cys421, Cys411-Cys427, Cys429-Cys438, Cys441-Cys451, Cys456-Cys469, Cys463-Cys475, and Cys477-Cys486. 3 Laminin EGF-like domains span residues 287–346 (CKCN…ACAT), 353–408 (CECY…VCIE), and 409–453 (CNCN…GCYP). N-linked (GlcNAc...) asparagine glycosylation occurs at Asn310. Asn395 carries N-linked (GlcNAc...) asparagine glycosylation. An N-linked (GlcNAc...) asparagine glycan is attached at Asn422. Gly507 is lipidated: GPI-anchor amidated glycine. Residues 508–530 (AAPRPATLLGCLLLLGLAARLGR) constitute a propeptide, removed in mature form.

In terms of assembly, interacts with LRRC4. N-glycosylated.

Its subcellular location is the cell membrane. In terms of biological role, involved in controlling patterning and neuronal circuit formation at the laminar, cellular, subcellular and synaptic levels. Promotes neurite outgrowth of both axons and dendrites. In Homo sapiens (Human), this protein is Netrin-G2.